Reading from the N-terminus, the 934-residue chain is Palmitoyltransferase ZDHHC8 (934 aa).

The Cytoplasmic segment spans residues 1–9 (MPKCDVKTR). A helical transmembrane segment spans residues 10 to 30 (YIPATFAWIVLLLTTFLFFFY). Residues 31 to 47 (PCQFYVKSHPWVLAYQG) lie on the Extracellular side of the membrane. The chain crosses the membrane as a helical span at residues 48–68 (VITFFVLANFTLATFMDPGII). Residues 69–142 (PKASPDEDCE…NNCIGRRNYR (74 aa)) lie on the Cytoplasmic side of the membrane. The region spanning 99-149 (KWCVTCKFYRPPRCSHCSVCNHCIETFDHHCPWVNNCIGRRNYRFFFFFLV) is the DHHC domain. The S-palmitoyl cysteine intermediate role is filled by cysteine 129. The helical transmembrane segment at 143–163 (FFFFFLVSLSIHMLSIFSLCL) threads the bilayer. At 164-177 (VYVLKIMPNIKDTA) the chain is on the extracellular side. Residues 178 to 198 (PIVAIILMGLVTILAIPIFGL) traverse the membrane as a helical segment. Over 199 to 934 (TGFHMVLVSR…IYDMNYEISV (736 aa)) the chain is Cytoplasmic. 6 disordered regions span residues 336–440 (NGYN…GYTS), 506–525 (MASP…RRPD), 669–705 (QRGV…SGIG), 751–780 (QQQQ…TMPQ), 835–862 (PNPM…TPTR), and 881–934 (LEQQ…EISV). 2 stretches are compositionally biased toward polar residues: residues 337 to 349 (GYNQ…TLYS) and 381 to 394 (RHNS…QVSD). The segment covering 397 to 411 (GLNGSVSTGGGGGGD) has biased composition (gly residues). Over residues 415 to 429 (HMRLYHPRHSPHARP) the composition is skewed to basic residues. 2 stretches are compositionally biased toward low complexity: residues 688-705 (QQQQ…SGIG) and 751-765 (QQQQ…AAAA). The span at 768-780 (HRSNPTSPTTMPQ) shows a compositional bias: polar residues. The segment covering 910-919 (MQSNASNSGT) has biased composition (polar residues).

This sequence belongs to the DHHC palmitoyltransferase family. ERF2/ZDHHC9 subfamily.

It localises to the golgi apparatus membrane. It is found in the cell membrane. The enzyme catalyses L-cysteinyl-[protein] + hexadecanoyl-CoA = S-hexadecanoyl-L-cysteinyl-[protein] + CoA. Functionally, palmitoyltransferase that catalyzes the addition of palmitate onto various protein substrates and therefore functions in several unrelated biological processes. Regulates tissue growth possibly by regulating Ras64B protein stability. May regulate CG34450 mRNA levels. In Drosophila melanogaster (Fruit fly), this protein is Palmitoyltransferase ZDHHC8.